The following is a 428-amino-acid chain: Serine--tRNA ligase (428 aa).

231-233 (TAE) provides a ligand contact to L-serine. An ATP-binding site is contributed by 262–264 (RAE). L-serine is bound at residue Glu-285. Residue 349–352 (EISS) coordinates ATP. An L-serine-binding site is contributed by Ser-385.

The protein belongs to the class-II aminoacyl-tRNA synthetase family. Type-1 seryl-tRNA synthetase subfamily. In terms of assembly, homodimer. The tRNA molecule binds across the dimer.

Its subcellular location is the cytoplasm. The enzyme catalyses tRNA(Ser) + L-serine + ATP = L-seryl-tRNA(Ser) + AMP + diphosphate + H(+). It carries out the reaction tRNA(Sec) + L-serine + ATP = L-seryl-tRNA(Sec) + AMP + diphosphate + H(+). It functions in the pathway aminoacyl-tRNA biosynthesis; selenocysteinyl-tRNA(Sec) biosynthesis; L-seryl-tRNA(Sec) from L-serine and tRNA(Sec): step 1/1. Its function is as follows. Catalyzes the attachment of serine to tRNA(Ser). Is also able to aminoacylate tRNA(Sec) with serine, to form the misacylated tRNA L-seryl-tRNA(Sec), which will be further converted into selenocysteinyl-tRNA(Sec). The protein is Serine--tRNA ligase of Methylorubrum extorquens (strain PA1) (Methylobacterium extorquens).